The primary structure comprises 396 residues: Elongation factor Tu (396 aa).

Residues 10–206 enclose the tr-type G domain; that stretch reads KPHVNVGTIG…ALDTYIPTPE (197 aa). A G1 region spans residues 19-26; sequence GHVDHGKT. 19 to 26 is a binding site for GTP; sequence GHVDHGKT. Threonine 26 provides a ligand contact to Mg(2+). A G2 region spans residues 60–64; it reads GITIN. The segment at 81–84 is G3; the sequence is DCPG. Residues 81-85 and 136-139 contribute to the GTP site; these read DCPGH and NKCD. A G4 region spans residues 136-139; the sequence is NKCD. Residues 174-176 are G5; the sequence is SAK.

It belongs to the TRAFAC class translation factor GTPase superfamily. Classic translation factor GTPase family. EF-Tu/EF-1A subfamily. Monomer.

Its subcellular location is the cytoplasm. The enzyme catalyses GTP + H2O = GDP + phosphate + H(+). In terms of biological role, GTP hydrolase that promotes the GTP-dependent binding of aminoacyl-tRNA to the A-site of ribosomes during protein biosynthesis. The sequence is that of Elongation factor Tu from Cupriavidus necator (strain ATCC 17699 / DSM 428 / KCTC 22496 / NCIMB 10442 / H16 / Stanier 337) (Ralstonia eutropha).